Consider the following 192-residue polypeptide: Ion-translocating oxidoreductase complex subunit B (192 aa).

The tract at residues 1–26 (MNAIWIAVVAVSLLGLAFGAILGYAS) is hydrophobic. The region spanning 32–91 (EDDPVVEKIDEILPQSQCGQCGYPGCRPYAEAIGSQGEKINRCAPGGEAVMLKIATLLNV) is the 4Fe-4S domain. [4Fe-4S] cluster contacts are provided by cysteine 49, cysteine 52, cysteine 57, cysteine 74, cysteine 117, cysteine 120, cysteine 123, cysteine 127, cysteine 147, cysteine 150, cysteine 153, and cysteine 157. 4Fe-4S ferredoxin-type domains follow at residues 108 to 137 (MLAV…GATR) and 138 to 167 (AMHT…LRPV).

This sequence belongs to the 4Fe4S bacterial-type ferredoxin family. RnfB subfamily. The complex is composed of six subunits: RnfA, RnfB, RnfC, RnfD, RnfE and RnfG. Requires [4Fe-4S] cluster as cofactor.

The protein localises to the cell inner membrane. In terms of biological role, part of a membrane-bound complex that couples electron transfer with translocation of ions across the membrane. This chain is Ion-translocating oxidoreductase complex subunit B, found in Citrobacter koseri (strain ATCC BAA-895 / CDC 4225-83 / SGSC4696).